A 245-amino-acid chain; its full sequence is MTLTASSSSRAVTNSPVVVALDYHNRDAAMAFVDKIDPRDCRLKVGKEMFTLFGPQFVRELQQRGFDIFLDLKFHDIPNTAAHAVAAAADLGVWMVNVHASGGARMMTAAREALVPFGKDAPLLIAVTVLTSMEASDLADLGVTLSPADYAERLAALTQKCGLDGVVCSAQEAVRFKQVFGQEFKLVTPGIRPQGSDAGDQRRIMTPEQALAAGVDYMVIGRPVTQSVDPAQTLKAINASLQRSA.

Residues D22, K44, 71–80, T131, R192, Q201, G221, and R222 contribute to the substrate site; that span reads DLKFHDIPNT. K73 serves as the catalytic Proton donor.

It belongs to the OMP decarboxylase family. Type 1 subfamily. In terms of assembly, homodimer.

The enzyme catalyses orotidine 5'-phosphate + H(+) = UMP + CO2. The protein operates within pyrimidine metabolism; UMP biosynthesis via de novo pathway; UMP from orotate: step 2/2. Its function is as follows. Catalyzes the decarboxylation of orotidine 5'-monophosphate (OMP) to uridine 5'-monophosphate (UMP). This chain is Orotidine 5'-phosphate decarboxylase, found in Escherichia coli O45:K1 (strain S88 / ExPEC).